Consider the following 952-residue polypeptide: uncharacterized protein (952 aa).

Positions 1 to 141 constitute a CheB-type methylesterase domain; the sequence is MASLLARHTK…PWIADYLIRR (141 aa). Positions 168–440 constitute a CheR-type methyltransferase domain; sequence VGQFDGLEPA…SARHRIWQAL (273 aa). The segment covering 923–935 has biased composition (polar residues); sequence HNQTEASPETSSG. Positions 923–952 are disordered; it reads HNQTEASPETSSGGLPGSDGTGADGGAPRA. A compositionally biased stretch (gly residues) spans 936–952; that stretch reads GLPGSDGTGADGGAPRA.

This is an uncharacterized protein from Rhodobacter capsulatus (Rhodopseudomonas capsulata).